Here is a 91-residue protein sequence, read N- to C-terminus: MDEVKYPVLTEKSIRLLERNQYTFNVDLQSNKTKIKNWIENFFDVKVIAMNSYRLPEKGGKRGSMIVHPIRCKRMIITLRTGDSIPLFSEQ.

The protein belongs to the universal ribosomal protein uL23 family. As to quaternary structure, part of the 50S ribosomal subunit.

It is found in the plastid. It localises to the chloroplast. In terms of biological role, binds to 23S rRNA. This is Large ribosomal subunit protein uL23c (rpl23) from Pinus koraiensis (Korean pine).